We begin with the raw amino-acid sequence, 698 residues long: MSIPQGLQERAAELRQLLNRAAHAYYVLDAPDLEDSVYDRLYRELLDLEAAHPELVEADSPTQRVGGSPAEGFRSVTHRIPLFSLDNAFSAEELRGWYTRLLKVLDREPPSGSPLPALAMVGELKIDGNALALSYDNGVLVRAATRGDGDQGEDITANVRTIASIPLRLHLDPPPAWVEVRGEALIPDNTFAAINSERAARDEPLFANPRNACAGTLRQLDPKVVAARRLDFFAYTLHLPEDWSGERPTSQWESLRWLEDAGFRVNPNAALLPDVDSVEQFFGDWDSRRHDLNYATDGVVVKLNDLRLQDAAGFTQKAPRWAIALKYPAEEAPSRLLKLTCQVGRTGVVTPVAEFEPVSLAGTSVSRATLHNADRLQELDLHSGDTIIVRKAGEIIPEVLRVLPELRPEGALPLELPQQCPSCGSDLVRESGEAATRCVNSSCPAILSGALRHWVSKGALDVDGLGSKLIEQLVERGLVRSIADLYRLDTALLTSLERMGEKSAGNLVAALAQSRTQPWSRQLYGLGIHHVGEVNAKALASAFADAHSLADAAVQRPEAITDLHGIGPEIAQSLQQWFNTSANQDLLQQLRAVGLTLAASDQERQALADRNNGKGHLNGQTFVLTGTLPSLSRSQAQALIEGAGGKVSGSVSKKTSFVVAGDEAGSKLDKANTLGVSVLDEAALMLLIQNSADTIHLL.

NAD(+) contacts are provided by residues Asp35–Asp39, Ser84–Leu85, and Glu123. Lys125 (N6-AMP-lysine intermediate) is an active-site residue. NAD(+) is bound by residues Arg146, Glu183, Lys302, and Lys326. Zn(2+) is bound by residues Cys420, Cys423, Cys438, and Cys443. The 87-residue stretch at Asn612–Leu698 folds into the BRCT domain.

This sequence belongs to the NAD-dependent DNA ligase family. LigA subfamily. Mg(2+) is required as a cofactor. The cofactor is Mn(2+).

It carries out the reaction NAD(+) + (deoxyribonucleotide)n-3'-hydroxyl + 5'-phospho-(deoxyribonucleotide)m = (deoxyribonucleotide)n+m + AMP + beta-nicotinamide D-nucleotide.. Its function is as follows. DNA ligase that catalyzes the formation of phosphodiester linkages between 5'-phosphoryl and 3'-hydroxyl groups in double-stranded DNA using NAD as a coenzyme and as the energy source for the reaction. It is essential for DNA replication and repair of damaged DNA. This Synechococcus sp. (strain WH7803) protein is DNA ligase.